The primary structure comprises 159 residues: Putative ribosomal RNA large subunit methyltransferase H (159 aa).

Residues L76, G108, and 127 to 132 contribute to the S-adenosyl-L-methionine site; that span reads FSKMTF.

It belongs to the RNA methyltransferase RlmH family.

Its subcellular location is the cytoplasm. The catalysed reaction is pseudouridine(1915) in 23S rRNA + S-adenosyl-L-methionine = N(3)-methylpseudouridine(1915) in 23S rRNA + S-adenosyl-L-homocysteine + H(+). Specifically methylates the pseudouridine at position 1915 (m3Psi1915) in 23S rRNA. This chain is Putative ribosomal RNA large subunit methyltransferase H, found in Methanococcus maripaludis (strain C5 / ATCC BAA-1333).